A 420-amino-acid chain; its full sequence is C-methyltransferase NovU (420 aa).

The protein belongs to the methyltransferase superfamily.

Its pathway is antibiotic biosynthesis; novobiocin biosynthesis. C-methyltransferase that acts together with NovW to catalyze the formation of dTDP-4-keto-6-deoxy-5-C-methyl-L-lyxo-hexose from dTDP-4-keto-6-deoxy-D-glucose in the novobiocin biosynthesis pathway, an aminocoumarin family antibiotic that targets bacterial DNA gyrases. In Streptomyces niveus (Streptomyces spheroides), this protein is C-methyltransferase NovU (novU).